Consider the following 590-residue polypeptide: Aspartate--tRNA(Asp/Asn) ligase (590 aa).

L-aspartate is bound at residue Glu175. The interval 199–202 is aspartate; sequence QQYK. L-aspartate-binding residues include Arg221 and His450. Position 221-223 (221-223) interacts with ATP; the sequence is RDE. Glu484 serves as a coordination point for ATP. Residue Arg491 participates in L-aspartate binding. 536-539 lines the ATP pocket; the sequence is GVDR.

Belongs to the class-II aminoacyl-tRNA synthetase family. Type 1 subfamily. As to quaternary structure, homodimer.

Its subcellular location is the cytoplasm. The catalysed reaction is tRNA(Asx) + L-aspartate + ATP = L-aspartyl-tRNA(Asx) + AMP + diphosphate. Aspartyl-tRNA synthetase with relaxed tRNA specificity since it is able to aspartylate not only its cognate tRNA(Asp) but also tRNA(Asn). Reaction proceeds in two steps: L-aspartate is first activated by ATP to form Asp-AMP and then transferred to the acceptor end of tRNA(Asp/Asn). In Rhodopseudomonas palustris (strain BisB18), this protein is Aspartate--tRNA(Asp/Asn) ligase.